A 547-amino-acid chain; its full sequence is Delta-guaiene synthase 1 (547 aa).

Mg(2+)-binding residues include aspartate 299, aspartate 303, and aspartate 444. A DDXXD motif motif is present at residues 299-303 (DDTYD).

Belongs to the terpene synthase family. Mg(2+) is required as a cofactor.

The enzyme catalyses (2E,6E)-farnesyl diphosphate = delta-guaiene + diphosphate. It catalyses the reaction (2E,6E)-farnesyl diphosphate = alpha-guaiene + diphosphate. It participates in secondary metabolite biosynthesis; terpenoid biosynthesis. Functionally, sesquiterpene synthase involved in the biosynthesis of delta-guaiene (81.2%) and alpha-guaiene (18.1%), two structures composed of five- and seven-membered rings. Also produces 0.7% of alpha-humulene. This chain is Delta-guaiene synthase 1 (C2), found in Aquilaria crassna (Eagle wood).